Consider the following 181-residue polypeptide: Putative manganese efflux pump MntP (181 aa).

Helical transmembrane passes span 35–55 (IIFGVIEGLTPLVGWALGSIA), 59–79 (VADWDHWIAFTLLLILGLLMI), 102–122 (AATGFATSIDAMAVGVSLAFI), 126–146 (ILITAAAIGLATFLMVTLGVM), and 161–181 (ILGGLALMGVGTVILYEHLTM).

This sequence belongs to the MntP (TC 9.B.29) family.

The protein localises to the cell inner membrane. Functionally, probably functions as a manganese efflux pump. The protein is Putative manganese efflux pump MntP of Nitrosomonas eutropha (strain DSM 101675 / C91 / Nm57).